The following is a 475-amino-acid chain: UDP-N-acetylmuramate--L-alanine ligase (475 aa).

Residue 125-131 (GTHGKTS) coordinates ATP.

Belongs to the MurCDEF family.

Its subcellular location is the cytoplasm. It catalyses the reaction UDP-N-acetyl-alpha-D-muramate + L-alanine + ATP = UDP-N-acetyl-alpha-D-muramoyl-L-alanine + ADP + phosphate + H(+). The protein operates within cell wall biogenesis; peptidoglycan biosynthesis. Its function is as follows. Cell wall formation. The sequence is that of UDP-N-acetylmuramate--L-alanine ligase from Mycolicibacterium gilvum (strain PYR-GCK) (Mycobacterium gilvum (strain PYR-GCK)).